We begin with the raw amino-acid sequence, 324 residues long: Protease HtpX homolog (324 aa).

2 helical membrane-spanning segments follow: residues 7–24 and 29–46; these read ALLL…GYLI and GALI…FTYW. Residue H130 coordinates Zn(2+). The active site involves E131. H134 provides a ligand contact to Zn(2+). 2 helical membrane-spanning segments follow: residues 145-165 and 172-192; these read ITAT…FFGG and GPGL…AMLV. E201 contributes to the Zn(2+) binding site. Residues 288-305 are compositionally biased toward polar residues; sequence PASTFSRGAGTAASSGTP. Positions 288-324 are disordered; that stretch reads PASTFSRGAGTAASSGTPRGTGRSPWGGQPRGRGPWG.

Belongs to the peptidase M48B family. Zn(2+) is required as a cofactor.

Its subcellular location is the cell inner membrane. In Rhodopseudomonas palustris (strain TIE-1), this protein is Protease HtpX homolog.